Reading from the N-terminus, the 785-residue chain is Endonuclease MutS2 (785 aa).

332 to 339 (GPNTGGKT) is an ATP binding site. One can recognise a Smr domain in the interval 710 to 785 (VDLRGMDSEE…GNGVTVVELK (76 aa)).

Belongs to the DNA mismatch repair MutS family. MutS2 subfamily. As to quaternary structure, homodimer. Binds to stalled ribosomes, contacting rRNA.

Endonuclease that is involved in the suppression of homologous recombination and thus may have a key role in the control of bacterial genetic diversity. In terms of biological role, acts as a ribosome collision sensor, splitting the ribosome into its 2 subunits. Detects stalled/collided 70S ribosomes which it binds and splits by an ATP-hydrolysis driven conformational change. Acts upstream of the ribosome quality control system (RQC), a ribosome-associated complex that mediates the extraction of incompletely synthesized nascent chains from stalled ribosomes and their subsequent degradation. Probably generates substrates for RQC. The polypeptide is Endonuclease MutS2 (Clostridium novyi (strain NT)).